Consider the following 647-residue polypeptide: Threonine--tRNA ligase (647 aa).

Positions 1 to 61 (MIKITFPDGA…TEDGSIEIVT (61 aa)) constitute a TGS domain. A catalytic region spans residues 242 to 540 (DHRKLGKELD…LIENYKGAFP (299 aa)). Residues Cys-336, His-387, and His-517 each coordinate Zn(2+).

It belongs to the class-II aminoacyl-tRNA synthetase family. Homodimer. Zn(2+) serves as cofactor.

It is found in the cytoplasm. It carries out the reaction tRNA(Thr) + L-threonine + ATP = L-threonyl-tRNA(Thr) + AMP + diphosphate + H(+). Its function is as follows. Catalyzes the attachment of threonine to tRNA(Thr) in a two-step reaction: L-threonine is first activated by ATP to form Thr-AMP and then transferred to the acceptor end of tRNA(Thr). Also edits incorrectly charged L-seryl-tRNA(Thr). This chain is Threonine--tRNA ligase, found in Streptococcus gordonii (strain Challis / ATCC 35105 / BCRC 15272 / CH1 / DL1 / V288).